Here is a 448-residue protein sequence, read N- to C-terminus: Na(+)-translocating NADH-quinone reductase subunit A (448 aa).

This sequence belongs to the NqrA family. As to quaternary structure, composed of six subunits; NqrA, NqrB, NqrC, NqrD, NqrE and NqrF.

It catalyses the reaction a ubiquinone + n Na(+)(in) + NADH + H(+) = a ubiquinol + n Na(+)(out) + NAD(+). Functionally, NQR complex catalyzes the reduction of ubiquinone-1 to ubiquinol by two successive reactions, coupled with the transport of Na(+) ions from the cytoplasm to the periplasm. NqrA to NqrE are probably involved in the second step, the conversion of ubisemiquinone to ubiquinol. This Alcanivorax borkumensis (strain ATCC 700651 / DSM 11573 / NCIMB 13689 / SK2) protein is Na(+)-translocating NADH-quinone reductase subunit A.